The primary structure comprises 163 residues: NADH-quinone oxidoreductase subunit I (163 aa).

2 4Fe-4S ferredoxin-type domains span residues 55 to 84 (RRYE…IESE) and 94 to 123 (TQYD…ETRV). Cys64, Cys67, Cys70, Cys74, Cys103, Cys106, Cys109, and Cys113 together coordinate [4Fe-4S] cluster.

It belongs to the complex I 23 kDa subunit family. As to quaternary structure, NDH-1 is composed of 14 different subunits. Subunits NuoA, H, J, K, L, M, N constitute the membrane sector of the complex. Requires [4Fe-4S] cluster as cofactor.

The protein localises to the cell inner membrane. It catalyses the reaction a quinone + NADH + 5 H(+)(in) = a quinol + NAD(+) + 4 H(+)(out). Its function is as follows. NDH-1 shuttles electrons from NADH, via FMN and iron-sulfur (Fe-S) centers, to quinones in the respiratory chain. The immediate electron acceptor for the enzyme in this species is believed to be ubiquinone. Couples the redox reaction to proton translocation (for every two electrons transferred, four hydrogen ions are translocated across the cytoplasmic membrane), and thus conserves the redox energy in a proton gradient. The sequence is that of NADH-quinone oxidoreductase subunit I from Hydrogenovibrio crunogenus (strain DSM 25203 / XCL-2) (Thiomicrospira crunogena).